The following is a 275-amino-acid chain: Hydroxyethylthiazole kinase (275 aa).

Position 57 (M57) interacts with substrate. Positions 132 and 178 each coordinate ATP. G205 contributes to the substrate binding site.

Belongs to the Thz kinase family. It depends on Mg(2+) as a cofactor.

It catalyses the reaction 5-(2-hydroxyethyl)-4-methylthiazole + ATP = 4-methyl-5-(2-phosphooxyethyl)-thiazole + ADP + H(+). It participates in cofactor biosynthesis; thiamine diphosphate biosynthesis; 4-methyl-5-(2-phosphoethyl)-thiazole from 5-(2-hydroxyethyl)-4-methylthiazole: step 1/1. In terms of biological role, catalyzes the phosphorylation of the hydroxyl group of 4-methyl-5-beta-hydroxyethylthiazole (THZ). The protein is Hydroxyethylthiazole kinase of Clavibacter sepedonicus (Clavibacter michiganensis subsp. sepedonicus).